A 357-amino-acid chain; its full sequence is Histidine biosynthesis bifunctional protein HisB (357 aa).

A histidinol-phosphatase region spans residues 1-168 (MTPILFIDRD…GIAHALADAP (168 aa)). D8 functions as the Nucleophile in the catalytic mechanism. Mg(2+)-binding residues include D8, D10, and D128. Residue D10 is the Proton donor of the active site. The tract at residues 169 to 357 (RIAVVQRDTK…TALPTTKGAL (189 aa)) is imidazoleglycerol-phosphate dehydratase.

It in the N-terminal section; belongs to the histidinol-phosphatase family. The protein in the C-terminal section; belongs to the imidazoleglycerol-phosphate dehydratase family. Mg(2+) is required as a cofactor.

It localises to the cytoplasm. It catalyses the reaction D-erythro-1-(imidazol-4-yl)glycerol 3-phosphate = 3-(imidazol-4-yl)-2-oxopropyl phosphate + H2O. The catalysed reaction is L-histidinol phosphate + H2O = L-histidinol + phosphate. The protein operates within amino-acid biosynthesis; L-histidine biosynthesis; L-histidine from 5-phospho-alpha-D-ribose 1-diphosphate: step 6/9. It functions in the pathway amino-acid biosynthesis; L-histidine biosynthesis; L-histidine from 5-phospho-alpha-D-ribose 1-diphosphate: step 8/9. The chain is Histidine biosynthesis bifunctional protein HisB from Stenotrophomonas maltophilia (strain R551-3).